We begin with the raw amino-acid sequence, 703 residues long: UvrABC system protein B (703 aa).

A Helicase ATP-binding domain is found at 33–190 (TRIENGENDV…RRFVAMQYKR (158 aa)). Residue 46-53 (GATGTGKT) coordinates ATP. Positions 99–122 (YYDYYQPEAYIPQTDTYIEKDSNI) match the Beta-hairpin motif. A Helicase C-terminal domain is found at 436–589 (QIDDLLAEIK…QIAYNQEHGI (154 aa)). One can recognise a UVR domain in the interval 659–694 (ADLIRQLSEQMHTAAEQLQFELAARLRDEIRDLKKE).

Belongs to the UvrB family. In terms of assembly, forms a heterotetramer with UvrA during the search for lesions. Interacts with UvrC in an incision complex.

It localises to the cytoplasm. Functionally, the UvrABC repair system catalyzes the recognition and processing of DNA lesions. A damage recognition complex composed of 2 UvrA and 2 UvrB subunits scans DNA for abnormalities. Upon binding of the UvrA(2)B(2) complex to a putative damaged site, the DNA wraps around one UvrB monomer. DNA wrap is dependent on ATP binding by UvrB and probably causes local melting of the DNA helix, facilitating insertion of UvrB beta-hairpin between the DNA strands. Then UvrB probes one DNA strand for the presence of a lesion. If a lesion is found the UvrA subunits dissociate and the UvrB-DNA preincision complex is formed. This complex is subsequently bound by UvrC and the second UvrB is released. If no lesion is found, the DNA wraps around the other UvrB subunit that will check the other stand for damage. The polypeptide is UvrABC system protein B (Bifidobacterium longum subsp. infantis (strain ATCC 15697 / DSM 20088 / JCM 1222 / NCTC 11817 / S12)).